The chain runs to 159 residues: Transcription elongation factor GreA (159 aa).

Residues Arg-5 to Ile-77 adopt a coiled-coil conformation.

Belongs to the GreA/GreB family.

Functionally, necessary for efficient RNA polymerase transcription elongation past template-encoded arresting sites. The arresting sites in DNA have the property of trapping a certain fraction of elongating RNA polymerases that pass through, resulting in locked ternary complexes. Cleavage of the nascent transcript by cleavage factors such as GreA or GreB allows the resumption of elongation from the new 3'terminus. GreA releases sequences of 2 to 3 nucleotides. The protein is Transcription elongation factor GreA of Alkaliphilus oremlandii (strain OhILAs) (Clostridium oremlandii (strain OhILAs)).